Here is a 296-residue protein sequence, read N- to C-terminus: Elongation factor Ts (296 aa).

Residues 82 to 85 (TDFV) form an involved in Mg(2+) ion dislocation from EF-Tu region.

It belongs to the EF-Ts family.

Its subcellular location is the cytoplasm. Functionally, associates with the EF-Tu.GDP complex and induces the exchange of GDP to GTP. It remains bound to the aminoacyl-tRNA.EF-Tu.GTP complex up to the GTP hydrolysis stage on the ribosome. The polypeptide is Elongation factor Ts (Coxiella burnetii (strain CbuK_Q154) (Coxiella burnetii (strain Q154))).